Consider the following 644-residue polypeptide: ATP-dependent zinc metalloprotease FtsH (644 aa).

The Cytoplasmic portion of the chain corresponds to 1-13 (MANNDNKHRRSMS). Residues 14 to 34 (MLLYIAVAIFVYLLLSNTLLP) traverse the membrane as a helical segment. Residues 35-117 (GLLRQQIQTV…SIPDNSANML (83 aa)) are Extracellular-facing. A helical transmembrane segment spans residues 118–138 (MYALIQYGIPLIIFLGIGFFI). Residues 139-644 (NRSLKRAMGD…DEGSSTPSEE (506 aa)) lie on the Cytoplasmic side of the membrane. 224-231 (GPPGTGKT) serves as a coordination point for ATP. His-445 is a binding site for Zn(2+). The active site involves Glu-446. Zn(2+)-binding residues include His-449 and Asp-522.

The protein in the central section; belongs to the AAA ATPase family. In the C-terminal section; belongs to the peptidase M41 family. As to quaternary structure, homohexamer. It depends on Zn(2+) as a cofactor.

It is found in the cell membrane. Functionally, acts as a processive, ATP-dependent zinc metallopeptidase for both cytoplasmic and membrane proteins. Plays a role in the quality control of integral membrane proteins. The protein is ATP-dependent zinc metalloprotease FtsH of Lancefieldella parvula (strain ATCC 33793 / DSM 20469 / CCUG 32760 / JCM 10300 / KCTC 3663 / VPI 0546 / 1246) (Atopobium parvulum).